A 102-amino-acid polypeptide reads, in one-letter code: Small ribosomal subunit protein uS10 (102 aa).

This sequence belongs to the universal ribosomal protein uS10 family. As to quaternary structure, part of the 30S ribosomal subunit.

In terms of biological role, involved in the binding of tRNA to the ribosomes. This is Small ribosomal subunit protein uS10 from Parvibaculum lavamentivorans (strain DS-1 / DSM 13023 / NCIMB 13966).